Reading from the N-terminus, the 266-residue chain is Tryptophan synthase alpha chain (266 aa).

Residues Glu-49 and Asp-60 each act as proton acceptor in the active site.

It belongs to the TrpA family. As to quaternary structure, tetramer of two alpha and two beta chains.

The enzyme catalyses (1S,2R)-1-C-(indol-3-yl)glycerol 3-phosphate + L-serine = D-glyceraldehyde 3-phosphate + L-tryptophan + H2O. It participates in amino-acid biosynthesis; L-tryptophan biosynthesis; L-tryptophan from chorismate: step 5/5. Its function is as follows. The alpha subunit is responsible for the aldol cleavage of indoleglycerol phosphate to indole and glyceraldehyde 3-phosphate. This is Tryptophan synthase alpha chain from Chloroflexus aurantiacus (strain ATCC 29364 / DSM 637 / Y-400-fl).